A 169-amino-acid polypeptide reads, in one-letter code: Endoribonuclease YbeY (169 aa).

Zn(2+) contacts are provided by histidine 126, histidine 130, and histidine 136.

This sequence belongs to the endoribonuclease YbeY family. Zn(2+) serves as cofactor.

It localises to the cytoplasm. Functionally, single strand-specific metallo-endoribonuclease involved in late-stage 70S ribosome quality control and in maturation of the 3' terminus of the 16S rRNA. In Bradyrhizobium sp. (strain BTAi1 / ATCC BAA-1182), this protein is Endoribonuclease YbeY.